The chain runs to 262 residues: 4-hydroxy-tetrahydrodipicolinate reductase (262 aa).

Gly9–Met14 contributes to the NAD(+) binding site. Arg36 is an NADP(+) binding site. NAD(+)-binding positions include Gly100–Thr102 and Ser121–Met124. His154 (proton donor/acceptor) is an active-site residue. A (S)-2,3,4,5-tetrahydrodipicolinate-binding site is contributed by His155. Catalysis depends on Lys158, which acts as the Proton donor. Gly164–Thr165 provides a ligand contact to (S)-2,3,4,5-tetrahydrodipicolinate.

Belongs to the DapB family.

The protein localises to the cytoplasm. The catalysed reaction is (S)-2,3,4,5-tetrahydrodipicolinate + NAD(+) + H2O = (2S,4S)-4-hydroxy-2,3,4,5-tetrahydrodipicolinate + NADH + H(+). It carries out the reaction (S)-2,3,4,5-tetrahydrodipicolinate + NADP(+) + H2O = (2S,4S)-4-hydroxy-2,3,4,5-tetrahydrodipicolinate + NADPH + H(+). The protein operates within amino-acid biosynthesis; L-lysine biosynthesis via DAP pathway; (S)-tetrahydrodipicolinate from L-aspartate: step 4/4. Catalyzes the conversion of 4-hydroxy-tetrahydrodipicolinate (HTPA) to tetrahydrodipicolinate. The polypeptide is 4-hydroxy-tetrahydrodipicolinate reductase (Wolbachia pipientis subsp. Culex pipiens (strain wPip)).